Consider the following 118-residue polypeptide: NADH-ubiquinone oxidoreductase chain 3 (118 aa).

Transmembrane regions (helical) follow at residues Ile-7–Leu-27, Leu-62–Val-82, and Ile-87–Leu-107.

This sequence belongs to the complex I subunit 3 family.

It is found in the mitochondrion membrane. The catalysed reaction is a ubiquinone + NADH + 5 H(+)(in) = a ubiquinol + NAD(+) + 4 H(+)(out). Functionally, core subunit of the mitochondrial membrane respiratory chain NADH dehydrogenase (Complex I) that is believed to belong to the minimal assembly required for catalysis. Complex I functions in the transfer of electrons from NADH to the respiratory chain. The immediate electron acceptor for the enzyme is believed to be ubiquinone. The sequence is that of NADH-ubiquinone oxidoreductase chain 3 (ND3) from Oenothera berteroana (Bertero's evening primrose).